The primary structure comprises 334 residues: Ketol-acid reductoisomerase (NADP(+)) (334 aa).

Positions 2-182 (PKMYYEKDTD…GGARAGVLET (181 aa)) constitute a KARI N-terminal Rossmann domain. NADP(+) is bound by residues 25–28 (YGSQ), Ser51, Ser53, and 83–86 (DEKQ). His108 is a catalytic residue. Residue Gly134 coordinates NADP(+). The region spanning 183 to 328 (TFKDETETDL…KELRGMMSWI (146 aa)) is the KARI C-terminal knotted domain. The Mg(2+) site is built by Asp191, Glu195, Glu227, and Glu231. Residue Ser252 participates in substrate binding.

The protein belongs to the ketol-acid reductoisomerase family. It depends on Mg(2+) as a cofactor.

It carries out the reaction (2R)-2,3-dihydroxy-3-methylbutanoate + NADP(+) = (2S)-2-acetolactate + NADPH + H(+). The enzyme catalyses (2R,3R)-2,3-dihydroxy-3-methylpentanoate + NADP(+) = (S)-2-ethyl-2-hydroxy-3-oxobutanoate + NADPH + H(+). It participates in amino-acid biosynthesis; L-isoleucine biosynthesis; L-isoleucine from 2-oxobutanoate: step 2/4. Its pathway is amino-acid biosynthesis; L-valine biosynthesis; L-valine from pyruvate: step 2/4. Functionally, involved in the biosynthesis of branched-chain amino acids (BCAA). Catalyzes an alkyl-migration followed by a ketol-acid reduction of (S)-2-acetolactate (S2AL) to yield (R)-2,3-dihydroxy-isovalerate. In the isomerase reaction, S2AL is rearranged via a Mg-dependent methyl migration to produce 3-hydroxy-3-methyl-2-ketobutyrate (HMKB). In the reductase reaction, this 2-ketoacid undergoes a metal-dependent reduction by NADPH to yield (R)-2,3-dihydroxy-isovalerate. The polypeptide is Ketol-acid reductoisomerase (NADP(+)) (Clostridium beijerinckii (strain ATCC 51743 / NCIMB 8052) (Clostridium acetobutylicum)).